The following is a 368-amino-acid chain: Peptide chain release factor 2 (368 aa).

Gln-250 is modified (N5-methylglutamine).

This sequence belongs to the prokaryotic/mitochondrial release factor family. In terms of processing, methylated by PrmC. Methylation increases the termination efficiency of RF2.

The protein resides in the cytoplasm. Its function is as follows. Peptide chain release factor 2 directs the termination of translation in response to the peptide chain termination codons UGA and UAA. The chain is Peptide chain release factor 2 from Mycolicibacterium smegmatis (strain ATCC 700084 / mc(2)155) (Mycobacterium smegmatis).